A 391-amino-acid polypeptide reads, in one-letter code: Formate-dependent phosphoribosylglycinamide formyltransferase (391 aa).

Residues Glu-20–Leu-21 and Glu-80 contribute to the N(1)-(5-phospho-beta-D-ribosyl)glycinamide site. Residues Arg-112, Lys-153, Ser-158 to Gln-163, Glu-193 to Ile-196, and Glu-201 each bind ATP. The ATP-grasp domain maps to Arg-117–Leu-306. Glu-265 and Glu-277 together coordinate Mg(2+). Residues Asp-284, Lys-354, and Arg-361–Arg-362 each bind N(1)-(5-phospho-beta-D-ribosyl)glycinamide.

Belongs to the PurK/PurT family. In terms of assembly, homodimer.

The enzyme catalyses N(1)-(5-phospho-beta-D-ribosyl)glycinamide + formate + ATP = N(2)-formyl-N(1)-(5-phospho-beta-D-ribosyl)glycinamide + ADP + phosphate + H(+). It participates in purine metabolism; IMP biosynthesis via de novo pathway; N(2)-formyl-N(1)-(5-phospho-D-ribosyl)glycinamide from N(1)-(5-phospho-D-ribosyl)glycinamide (formate route): step 1/1. In terms of biological role, involved in the de novo purine biosynthesis. Catalyzes the transfer of formate to 5-phospho-ribosyl-glycinamide (GAR), producing 5-phospho-ribosyl-N-formylglycinamide (FGAR). Formate is provided by PurU via hydrolysis of 10-formyl-tetrahydrofolate. The sequence is that of Formate-dependent phosphoribosylglycinamide formyltransferase from Shewanella oneidensis (strain ATCC 700550 / JCM 31522 / CIP 106686 / LMG 19005 / NCIMB 14063 / MR-1).